A 301-amino-acid chain; its full sequence is Ribosome-inactivating protein (301 aa).

Positions 1–16 (MAEITLEPSDLMAQTN) are cleaved as a propeptide — or 12 (in 10% of the molecules). A propeptide spanning residues 162 to 186 (MATLEEEEVKMQMQMPEAADLAAAA) is cleaved from the precursor. Glu-207 is an active-site residue. Positions 258 to 301 (VIPDMQKLGIKDKNEAARIVALVKNQTTAAAATAASADNDDDEA) are excised as a propeptide.

Belongs to the ribosome-inactivating protein family. Type 1 RIP subfamily. Synthesized and stored in the kernel as a 34 kDa inactive precursor. During germination, this neutral precursor is converted into a basic, active form by limited proteolysis, which removes 25 AA of net charge -6 from the center of the polypeptide chain. Additional processing also occurs at the N- and C-termini of the polypeptide. A two-chain active RIP (comprised of 16.5 and 8.5 kDa fragments that remain tightly associated) is produced from this processing event.

The catalysed reaction is Endohydrolysis of the N-glycosidic bond at one specific adenosine on the 28S rRNA.. Its function is as follows. Potent catalytic inactivator of eukaryotic protein synthesis. It may be a component of natural defense mechanisms involved in protecting the kernel against soil-borne fungal infections. The chain is Ribosome-inactivating protein from Zea mays (Maize).